The chain runs to 370 residues: Cytochrome b (370 aa).

4 helical membrane-spanning segments follow: residues Phe25–Val45, Trp69–Ile90, Trp105–Leu125, and Phe170–Ile190. Residues His75 and His89 each coordinate heme b. The heme b site is built by His174 and His188. His193 is an a ubiquinone binding site. The next 4 membrane-spanning stretches (helical) occupy residues Tyr218 to Ser238, Leu280 to His300, Phe312 to Thr332, and Phe339 to Pro358.

It belongs to the cytochrome b family. As to quaternary structure, the cytochrome bc1 complex contains 3 respiratory subunits (MT-CYB, CYC1 and UQCRFS1), 2 core proteins (UQCRC1 and UQCRC2) and probably 6 low-molecular weight proteins. Heme b serves as cofactor.

Its subcellular location is the mitochondrion inner membrane. Component of the ubiquinol-cytochrome c reductase complex (complex III or cytochrome b-c1 complex) that is part of the mitochondrial respiratory chain. The b-c1 complex mediates electron transfer from ubiquinol to cytochrome c. Contributes to the generation of a proton gradient across the mitochondrial membrane that is then used for ATP synthesis. The polypeptide is Cytochrome b (MT-CYB) (Eunectes murinus (Green anaconda)).